Consider the following 62-residue polypeptide: Large ribosomal subunit protein uL30 (62 aa).

It belongs to the universal ribosomal protein uL30 family. As to quaternary structure, part of the 50S ribosomal subunit.

The protein is Large ribosomal subunit protein uL30 of Cereibacter sphaeroides (strain ATCC 17029 / ATH 2.4.9) (Rhodobacter sphaeroides).